The primary structure comprises 668 residues: DNA ligase (668 aa).

NAD(+)-binding positions include 37–41 (DNVYD), 86–87 (SM), and Glu116. Lys118 serves as the catalytic N6-AMP-lysine intermediate. The NAD(+) site is built by Arg139, Glu173, Lys288, and Lys312. Positions 406, 409, 424, and 429 each coordinate Zn(2+). One can recognise a BRCT domain in the interval 591–668 (IPDNPFKDKT…TEEEAIAQIK (78 aa)).

It belongs to the NAD-dependent DNA ligase family. LigA subfamily. Requires Mg(2+) as cofactor. It depends on Mn(2+) as a cofactor.

The catalysed reaction is NAD(+) + (deoxyribonucleotide)n-3'-hydroxyl + 5'-phospho-(deoxyribonucleotide)m = (deoxyribonucleotide)n+m + AMP + beta-nicotinamide D-nucleotide.. DNA ligase that catalyzes the formation of phosphodiester linkages between 5'-phosphoryl and 3'-hydroxyl groups in double-stranded DNA using NAD as a coenzyme and as the energy source for the reaction. It is essential for DNA replication and repair of damaged DNA. The protein is DNA ligase of Lactobacillus acidophilus (strain ATCC 700396 / NCK56 / N2 / NCFM).